We begin with the raw amino-acid sequence, 858 residues long: MTNKLRIYEFAKLLEIQNKDLMDILNKLNIEHKNHMSALEENDINLVLEYILQEKEKEKEHAEKRRERLPSHKEGRSGERQAKTFDEKKHTRHGEKASHPYDKRGEQKLQQKSQQDVRQKFDREKRERHQEAIAKESGKKLEGQERKAVVHDQKVVELFPQQEPEKRQAAKPKYEVAKEQKIEKRYQDKVAAKQKTEKATKHRKQLFNVDELTQEEVTVDREELEKIDKEVEDTLLEEEYLQEKHVRRGKKEKLKKRSKEQKEVLKLQTKTVQEEKKEEIVKIPEKITVGEFANLIGKPAAEVIKKLIMLGVMANINQEIDFDVASLIAEDYGFKVEKEIIKSEEEILLEDQEDPEETLQPRPPVVVVMGHVDHGKTSLLDAIRNTNVTEKEAGGITQHIGASVVEVNGRKITFLDTPGHEAFTAMRARGAQVTDIAVLVVAADDGVMPQTVEAINHAKAANVTIIVAINKIDKPEANPERVKQQLSEYGLIPEEWGGDTVFVNVSAKKKIGIDHLLEMILLVADLLELKANPNRPARGRVIEAKLDKGRGPVATVLVQKGTLKVGDYVVVGSTWGRVRAMIDDKGQRIKEAGPSMPVEILGLEDVPTAGDELVCVKDEKTAKTIAQIRQERLKEEKMQQSKISLDELFERIQKGQLKELRVIIKADVQGSVEALKSAIERLSNDKVTVKVIHAAVGAITESDVTLASASDAIIIGFNVRPEVGAMSLAEKEKVDIRMYRIIYDVINDIKAAMKGLLEPVYKEVIIGHAEVRQIFKSSSVGTIAGCYVLDGKITRTSNARIIRDGVVVYEGKLASLKRFKDDVREVAAGYECGMTFEKFNDIKEGDIVEAFEMQKVES.

Positions lysine 59–lysine 147 are disordered. The 170-residue stretch at proline 361–lysine 530 folds into the tr-type G domain. Residues glycine 370 to threonine 377 form a G1 region. Residue glycine 370–threonine 377 coordinates GTP. The tract at residues glycine 395–histidine 399 is G2. The G3 stretch occupies residues aspartate 416 to glycine 419. GTP-binding positions include aspartate 416–histidine 420 and asparagine 470–aspartate 473. Positions asparagine 470 to aspartate 473 are G4. The tract at residues serine 506–lysine 508 is G5.

It belongs to the TRAFAC class translation factor GTPase superfamily. Classic translation factor GTPase family. IF-2 subfamily.

Its subcellular location is the cytoplasm. One of the essential components for the initiation of protein synthesis. Protects formylmethionyl-tRNA from spontaneous hydrolysis and promotes its binding to the 30S ribosomal subunits. Also involved in the hydrolysis of GTP during the formation of the 70S ribosomal complex. In Caldicellulosiruptor saccharolyticus (strain ATCC 43494 / DSM 8903 / Tp8T 6331), this protein is Translation initiation factor IF-2.